Reading from the N-terminus, the 145-residue chain is Endoribonuclease YbeY (145 aa).

3 residues coordinate Zn(2+): histidine 109, histidine 113, and histidine 119.

Belongs to the endoribonuclease YbeY family. It depends on Zn(2+) as a cofactor.

It is found in the cytoplasm. Its function is as follows. Single strand-specific metallo-endoribonuclease involved in late-stage 70S ribosome quality control and in maturation of the 3' terminus of the 16S rRNA. This Ruthia magnifica subsp. Calyptogena magnifica protein is Endoribonuclease YbeY.